The primary structure comprises 188 residues: Elongation factor P (188 aa).

Belongs to the elongation factor P family.

The protein localises to the cytoplasm. It functions in the pathway protein biosynthesis; polypeptide chain elongation. In terms of biological role, involved in peptide bond synthesis. Stimulates efficient translation and peptide-bond synthesis on native or reconstituted 70S ribosomes in vitro. Probably functions indirectly by altering the affinity of the ribosome for aminoacyl-tRNA, thus increasing their reactivity as acceptors for peptidyl transferase. In Anaplasma marginale (strain St. Maries), this protein is Elongation factor P.